The chain runs to 220 residues: NADH-quinone oxidoreductase subunit B (220 aa).

[4Fe-4S] cluster is bound by residues C37, C38, C103, and C132. The tract at residues 174 to 220 is disordered; that stretch reads PSSERYAPKNRSQRKLAERQQAAQRREMGAEKPLGALEERAELNAGR. Over residues 210–220 the composition is skewed to basic and acidic residues; that stretch reads LEERAELNAGR.

It belongs to the complex I 20 kDa subunit family. NDH-1 is composed of 14 different subunits. Subunits NuoB, C, D, E, F, and G constitute the peripheral sector of the complex. Requires [4Fe-4S] cluster as cofactor.

It is found in the cell membrane. The catalysed reaction is a quinone + NADH + 5 H(+)(in) = a quinol + NAD(+) + 4 H(+)(out). Functionally, NDH-1 shuttles electrons from NADH, via FMN and iron-sulfur (Fe-S) centers, to quinones in the respiratory chain. The immediate electron acceptor for the enzyme in this species is believed to be a menaquinone. Couples the redox reaction to proton translocation (for every two electrons transferred, four hydrogen ions are translocated across the cytoplasmic membrane), and thus conserves the redox energy in a proton gradient. This chain is NADH-quinone oxidoreductase subunit B, found in Saccharopolyspora erythraea (strain ATCC 11635 / DSM 40517 / JCM 4748 / NBRC 13426 / NCIMB 8594 / NRRL 2338).